We begin with the raw amino-acid sequence, 297 residues long: Beta-1,3-galactosyltransferase 5 (297 aa).

Residues 1–7 (MAFPKMR) lie on the Cytoplasmic side of the membrane. The chain crosses the membrane as a helical; Signal-anchor for type II membrane protein span at residues 8–28 (LMYVCLLVLGALCVYFSMYSL). Residues 29 to 297 (NLFKEQSFVY…KPRTLLDYWQ (269 aa)) lie on the Lumenal side of the membrane. Residues N130, N174, and N231 are each glycosylated (N-linked (GlcNAc...) asparagine).

This sequence belongs to the glycosyltransferase 31 family.

It is found in the golgi apparatus membrane. The catalysed reaction is a globoside Gb4Cer (d18:1(4E)) + UDP-alpha-D-galactose = a globoside GalGb4Cer (d18:1(4E)) + UDP + H(+). It participates in protein modification; protein glycosylation. In terms of biological role, catalyzes the transfer of Gal to GlcNAc-based acceptors with a preference for the core3 O-linked glycan GlcNAc(beta1,3)GalNAc structure. Can use glycolipid LC3Cer as an efficient acceptor. This chain is Beta-1,3-galactosyltransferase 5 (B3GALT5), found in Pan troglodytes (Chimpanzee).